The sequence spans 641 residues: Frizzled-1 (641 aa).

An N-terminal signal peptide occupies residues 1-68 (MAEEAVPSES…WLLEAPLLLG (68 aa)). The Extracellular segment spans residues 69 to 316 (VRAQPAGQVS…PEELRFSRTW (248 aa)). Residues 74-99 (AGQVSGPGQQRPPPPQPQQGGQQYNG) are disordered. The FZ domain occupies 106–224 (PDHGYCQPIS…HGAGELCVGQ (119 aa)). 5 disulfide bridges follow: C111–C172, C119–C165, C156–C192, C182–C221, and C186–C209. The N-linked (GlcNAc...) asparagine glycan is linked to N125. N225 carries an N-linked (GlcNAc...) asparagine glycan. Residues 317–337 (IGIWSVLCCASTLFTVLTYLV) form a helical membrane-spanning segment. Over 338-348 (DMRRFSYPERP) the chain is Cytoplasmic. A helical membrane pass occupies residues 349-369 (IIFLSGCYTAVAVAYIAGFLL). Over 370 to 396 (EDRVVCNDKFAEDGARTVAQGTKKEGC) the chain is Extracellular. The chain crosses the membrane as a helical span at residues 397–417 (TILFMMLYFFSMASSIWWVIL). Over 418 to 439 (SLTWFLAAGMKWGHEAIEANSQ) the chain is Cytoplasmic. A helical membrane pass occupies residues 440 to 460 (YFHLAAWAVPAIKTITILALG). Over 461 to 483 (QVDGDVLSGVCFVGLNNVDALRG) the chain is Extracellular. Residues 484 to 504 (FVLAPLFVYLFIGTSFLLAGF) traverse the membrane as a helical segment. Residues 505–530 (VSLFRIRTIMKHDGTKTEKLEKLMVR) lie on the Cytoplasmic side of the membrane. The chain crosses the membrane as a helical span at residues 531–551 (IGVFSVLYTVPATIVIACYFY). At 552 to 595 (EQAFRDQWERSWVAQSCKSYAIPCPHLQGGGGVPPHPPMSPDFT) the chain is on the extracellular side. Residues 596-616 (VFMIKYLMTLIVGITSGFWIW) traverse the membrane as a helical segment. At 617–641 (SGKTLNSWRKFYTRLTNSKQGETTV) the chain is on the cytoplasmic side. A Lys-Thr-X-X-X-Trp motif, mediates interaction with the PDZ domain of Dvl family members motif is present at residues 619-624 (KTLNSW). A PDZ-binding motif is present at residues 639–641 (TTV).

The protein belongs to the G-protein coupled receptor Fz/Smo family. As to quaternary structure, interacts with MYOC. Interacts with WNT7B. Ubiquitinated by ZNRF3, leading to its degradation by the proteasome. As to expression, widely expressed. Most abundant in kidney, liver, uterus, ovary and heart. Lower levels seen in brain and intestine. Extremely low in calvaria, mammary glands and testis.

The protein localises to the cell membrane. Receptor for Wnt proteins. Activated by WNT3A, WNT3, WNT1 and to a lesser extent WNT2, but apparently not by WNT4, WNT5A, WNT5B, WNT6 or WNT7A. Contradictory results have been reported for activation by WNT7B. Functions in the canonical Wnt/beta-catenin signaling pathway. The canonical Wnt/beta-catenin signaling pathway leads to the activation of disheveled proteins, inhibition of GSK-3 kinase, nuclear accumulation of beta-catenin and activation of Wnt target genes. A second signaling pathway involving PKC and calcium fluxes has been seen for some family members, but it is not yet clear if it represents a distinct pathway or if it can be integrated in the canonical pathway, as PKC seems to be required for Wnt-mediated inactivation of GSK-3 kinase. Both pathways seem to involve interactions with G-proteins. May be involved in transduction and intercellular transmission of polarity information during tissue morphogenesis and/or in differentiated tissues. This is Frizzled-1 (Fzd1) from Rattus norvegicus (Rat).